Reading from the N-terminus, the 915-residue chain is Translation initiation factor IF-2 (915 aa).

The span at 83–94 (QSRRAVEKEQIL) shows a compositional bias: basic and acidic residues. Disordered stretches follow at residues 83 to 177 (QSRR…PEPP), 216 to 280 (EADR…KPAV), and 293 to 328 (ISGM…LLRE). 2 stretches are compositionally biased toward low complexity: residues 111–129 (VRAA…EAPS) and 137–164 (APAT…LSAP). Residues 165 to 177 (LPEPVPEPVPEPP) are compositionally biased toward pro residues. The segment covering 293–305 (ISGMDDSSGTGSR) has biased composition (polar residues). Basic and acidic residues predominate over residues 314–328 (MEREREQEEADLLRE). In terms of domain architecture, tr-type G spans 412–582 (TRPPVVTIMG…LTEAEMRELK (171 aa)). The G1 stretch occupies residues 421–428 (GHVDHGKT). 421–428 (GHVDHGKT) is a GTP binding site. The interval 446 to 450 (GITQH) is G2. Residues 468 to 471 (DTPG) are G3. Residues 468 to 472 (DTPGH) and 522 to 525 (NKMD) contribute to the GTP site. The segment at 522-525 (NKMD) is G4. The tract at residues 558 to 560 (SAK) is G5.

The protein belongs to the TRAFAC class translation factor GTPase superfamily. Classic translation factor GTPase family. IF-2 subfamily.

It is found in the cytoplasm. Functionally, one of the essential components for the initiation of protein synthesis. Protects formylmethionyl-tRNA from spontaneous hydrolysis and promotes its binding to the 30S ribosomal subunits. Also involved in the hydrolysis of GTP during the formation of the 70S ribosomal complex. The protein is Translation initiation factor IF-2 of Chlorobium luteolum (strain DSM 273 / BCRC 81028 / 2530) (Pelodictyon luteolum).